Consider the following 295-residue polypeptide: Nucleotide-binding protein BH3569 (295 aa).

14-21 (GMSGAGKT) is a binding site for ATP. 65–68 (DLRG) is a GTP binding site.

It belongs to the RapZ-like family.

Its function is as follows. Displays ATPase and GTPase activities. The protein is Nucleotide-binding protein BH3569 of Halalkalibacterium halodurans (strain ATCC BAA-125 / DSM 18197 / FERM 7344 / JCM 9153 / C-125) (Bacillus halodurans).